The chain runs to 146 residues: UPF0742 protein SPAC977.02 (146 aa).

The helical transmembrane segment at 38–60 threads the bilayer; that stretch reads LTVKYCLAVKLLIYLLYCWYIYS.

Belongs to the UPF0742 family.

Its subcellular location is the cytoplasm. It is found in the nucleus membrane. This is UPF0742 protein SPAC977.02 from Schizosaccharomyces pombe (strain 972 / ATCC 24843) (Fission yeast).